Here is a 512-residue protein sequence, read N- to C-terminus: Sodium-dependent phosphate transport protein 1, chloroplastic (512 aa).

The N-terminal 59 residues, 1 to 59 (MNARALLCSSNIHSLYTSNRPPEKTSSSRSLRNLKPSPKSLRVWIYPRNRSSVFRVLVR), are a transit peptide targeting the chloroplast. Transmembrane regions (helical) follow at residues 103–123 (WVIV…RVNM), 141–161 (VGLI…AGGI), 171–191 (VLGF…VAAK), 192–212 (LGLP…GVAM), 234–254 (LVYS…PFLI), 257–277 (FGWP…LTLW), 323–343 (VWAL…LLTW), 361–381 (LLSV…GWIA), 401–421 (IGFL…SPTM), 453–473 (GVLL…GTAA), and 486–506 (VFTI…LFST).

This sequence belongs to the major facilitator superfamily. Sodium/anion cotransporter (TC 2.A.1.14) family. As to expression, expressed in flower buds, sepals of mature flowers and mature leaves, less in senescent leaves and at low levels in roots.

The protein localises to the plastid. Its subcellular location is the chloroplast thylakoid membrane. Specific for inorganic phosphate transport across the thylakoid membrane in a sodium dependent manner. Binds glutamate but cannot transport it. May act as an ascorbate transporter at the thylakoid membrane. The polypeptide is Sodium-dependent phosphate transport protein 1, chloroplastic (ANTR1) (Arabidopsis thaliana (Mouse-ear cress)).